The sequence spans 158 residues: Endoribonuclease YbeY (158 aa).

Zn(2+) contacts are provided by H119, H123, and H129.

It belongs to the endoribonuclease YbeY family. Zn(2+) serves as cofactor.

It localises to the cytoplasm. Its function is as follows. Single strand-specific metallo-endoribonuclease involved in late-stage 70S ribosome quality control and in maturation of the 3' terminus of the 16S rRNA. The protein is Endoribonuclease YbeY of Acinetobacter baumannii (strain AB307-0294).